A 956-amino-acid chain; its full sequence is Calsyntenin-3 (956 aa).

Residues Met1–Cys19 form the signal peptide. The Cytoplasmic portion of the chain corresponds to Met1–Glu30. At Asn20–Ala847 the chain is on the extracellular side. Cadherin domains follow at residues Ile29–Phe145 and Val146–Trp246. An intramembrane region (helical) is located at residues Ala31 to Phe51. Topologically, residues Ala52–His71 are cytoplasmic. An intramembrane region (helical) is located at residues Gly72–Lys94. The Cytoplasmic segment spans residues Glu95–Arg151. An intramembrane region (helical) is located at residues Ala152 to Asp172. The Cytoplasmic segment spans residues Cys173–Tyr255. Residues Ala256–Pro276 traverse the membrane as a helical segment. Residues Leu277–Ser364 lie on the Lumenal side of the membrane. N-linked (GlcNAc...) asparagine glycans are attached at residues Asn299, Asn327, Asn347, Asn507, and Asn740. Residues Ala848–Val868 form a helical membrane-spanning segment. Residues Arg869–Tyr956 are Cytoplasmic-facing. Residues Gln916–Tyr956 are disordered. Residues Gln927 to Val937 are compositionally biased toward acidic residues. The segment covering Ser943–Tyr956 has biased composition (basic and acidic residues).

This sequence belongs to the calsyntenin family. As to quaternary structure, interacts (via cadherin domains) with both alpha and beta isoforms of neurexins (NRXN1, NRXN2 and NRXN3). Directly interacts with APBA2. Forms a tripartite complex with APBA2 and APP. Interacts with low affinity with KLC1. Interacts with SLC23A2/SVCT2. In terms of assembly, interacts with CIDEA; inhibiting the lipid transferase activity of CIDEA. Interacts with CIDEC; inhibiting the lipid transferase activity of CIDEC. Proteolytically processed under normal cellular conditions. A primary zeta-cleavage generates a large extracellular (soluble) N-terminal domain (sAlc) and a short C-terminal transmembrane fragment (CTF1). A secondary cleavage catalyzed by gamma-secretase within the transmembrane domain releases the beta-Alc-beta chain in the extracellular milieu and produces an intracellular fragment (AlcICD). This processing is strongly suppressed in the tripartite complex formed with APBA2 and APP, which seems to prevent the association with gamma-secretase. In terms of processing, ubiquitinated: endoplasmic reticulum-localized protein is ubiquitinated and degraded by the endoplasmic reticulum-associated degradation (ERAD) pathway. According to PubMed:12498782, expressed predominantly in the brain and in kidney. Low levels in heart, skeletal muscle, liver, placenta, pancreas and lung. According to PubMed:12972431, predominant expression in brain, and only marginal in kidney. In brain, present throughout all cortical layers, highest levels in GABAergic neurons (based on morphology and distribution pattern). As to expression, expression is restricted to adipose tissue, with high expression in multilocular thermogenic adipocytes (brown adipose tissue).

Its subcellular location is the postsynaptic cell membrane. It localises to the endoplasmic reticulum membrane. The protein localises to the golgi apparatus membrane. The protein resides in the cell projection. It is found in the dendrite. Its subcellular location is the lipid droplet. In terms of biological role, postsynaptic adhesion molecule that binds to presynaptic neurexins to mediate both excitatory and inhibitory synapse formation. Promotes synapse development by acting as a cell adhesion molecule at the postsynaptic membrane, which associates with both neurexin-alpha and neurexin-beta proteins at the presynaptic membrane. Regulates the balance between excitatory and inhibitory synapses by inhibiting formation of excitatory parallel-fiber synapses and promoting formation of inhibitory synapses in the same neuron. May also be involved in ascorbate (vitamin C) uptake via its interaction with SLC23A2/SVCT2. Complex formation with APBA2 and APP, stabilizes APP metabolism and enhances APBA2-mediated suppression of beta-APP40 secretion, due to the retardation of intracellular APP maturation. Adipose-specific isoform that plays a key role in adaptive thermogenesis. Facilitates the efficient use of stored triglyceride by promoting multilocular morphology of thermogenic adipocytes: acts by inhibiting the activity of CIDEA and CIDEC on lipid droplets, thereby preventing lipid droplet fusion and facilitating lipid utilization. May also participate in adaptive thermogenesis by promoting sympathetic innervation of thermogenic adipose tissue: acts by driving secretion of neurotrophic factor S100B from brown adipocytes, stimulating neurite outgrowth from sympathetic neurons. The protein is Calsyntenin-3 of Homo sapiens (Human).